The sequence spans 266 residues: Single-stranded DNA-binding protein WHY1, chloroplastic (266 aa).

A chloroplast-targeting transit peptide spans 1-37; it reads MPPPAPLFLSLASTPPPALMPVHHPRAPQSLTLVPPV. Residues 53–81 are disordered; sequence SPRHSDYFDPRAPPPPRGDGGYGRPPNGA. The tract at residues 94–99 is required for ssDNA binding; sequence KGKAAL. The short motif at 172-185 is the Nuclear localization signal element; that stretch reads KGRSEEGKVRKVLK.

It belongs to the Whirly family. As to quaternary structure, homotetramer.

It is found in the plastid. Its subcellular location is the chloroplast stroma. The protein resides in the nucleus. Functionally, single-stranded DNA and RNA binding protein that maintains plastid genome stability by preventing break-induced and short homology-dependent illegitimate recombinations. Functions in RNA metabolism and is involved in the maturation of the atpF and 23S ribosomal RNAs. In Zea mays (Maize), this protein is Single-stranded DNA-binding protein WHY1, chloroplastic (WHY1).